The chain runs to 697 residues: Polyribonucleotide nucleotidyltransferase (697 aa).

Mg(2+)-binding residues include aspartate 488 and aspartate 494. In terms of domain architecture, KH spans 555-614; that stretch reads PTLLTLKINPDKIRDVIGKGGATIRALTEETGCTIDIEDDGSVKIYGETREKADEAVRRV. The 69-residue stretch at 624–692 folds into the S1 motif domain; it reads GAIYEGKVTR…QRGRIKLSMK (69 aa).

It belongs to the polyribonucleotide nucleotidyltransferase family. As to quaternary structure, component of the RNA degradosome, which is a multiprotein complex involved in RNA processing and mRNA degradation. The cofactor is Mg(2+).

The protein resides in the cytoplasm. It catalyses the reaction RNA(n+1) + phosphate = RNA(n) + a ribonucleoside 5'-diphosphate. Involved in mRNA degradation. Catalyzes the phosphorolysis of single-stranded polyribonucleotides processively in the 3'- to 5'-direction. This chain is Polyribonucleotide nucleotidyltransferase, found in Alcanivorax borkumensis (strain ATCC 700651 / DSM 11573 / NCIMB 13689 / SK2).